The primary structure comprises 131 residues: Transcription antitermination protein NusB (131 aa).

This sequence belongs to the NusB family.

Its function is as follows. Involved in transcription antitermination. Required for transcription of ribosomal RNA (rRNA) genes. Binds specifically to the boxA antiterminator sequence of the ribosomal RNA (rrn) operons. The protein is Transcription antitermination protein NusB of Campylobacter curvus (strain 525.92).